We begin with the raw amino-acid sequence, 361 residues long: Aminomethyltransferase (361 aa).

This sequence belongs to the GcvT family. In terms of assembly, the glycine cleavage system is composed of four proteins: P, T, L and H.

The enzyme catalyses N(6)-[(R)-S(8)-aminomethyldihydrolipoyl]-L-lysyl-[protein] + (6S)-5,6,7,8-tetrahydrofolate = N(6)-[(R)-dihydrolipoyl]-L-lysyl-[protein] + (6R)-5,10-methylene-5,6,7,8-tetrahydrofolate + NH4(+). The glycine cleavage system catalyzes the degradation of glycine. This is Aminomethyltransferase from Phocaeicola vulgatus (strain ATCC 8482 / DSM 1447 / JCM 5826 / CCUG 4940 / NBRC 14291 / NCTC 11154) (Bacteroides vulgatus).